The sequence spans 57 residues: Potassium channel toxin gamma-KTx 2.1 (57 aa).

Residues 1-21 form the signal peptide; sequence MKISFVLLLTLFICSIGWSEA. 3 cysteine pairs are disulfide-bonded: Cys-28-Cys-49, Cys-34-Cys-54, and Cys-38-Cys-56.

It belongs to the short scorpion toxin superfamily. Potassium channel inhibitor family. Gamma-KTx 2 subfamily. As to expression, expressed by the venom gland.

It localises to the secreted. Blocks human and/or rat Kv11.1/KCNH2/ERG1, Kv11.2/KCNH6/ERG2 and Kv11.3/KCNH7/ERG3 by binding to channel outer vestibule (S5P domain) with a 1:1 stoichiometry. Inhibition data are the following: hERG1 (reversible, Kd=7.7 nM, IC(50)=3.3 nM, IC(50)=11.9 nM), rERG1 (reversible, Kd=19 nM), hERG2 (reversible, Kd=77 nM), rERG2 (irreversible, Kd=4.2 nM), hERG3 (reversible, Kd=11.5 nM) and rERG3 (reversible, Kd=747 nM) potassium channels. Also has a minimal effect on rat ELK1/KCNH4 potassium channels (9% inhibition at 100 nM). Both this toxin and CnErgTx1 (AC Q86QT3) share mechanism of action and have overlapping binding sites on ERG1. The potency of these two toxins is not affected by elevating potassium ion concentration from 2 to 98 mM. In addition, at high toxin concentrations, block of ERG1 macroscopic currents by these two toxins is incomplete (88%). The blockade by this toxin is preferentially closed channel state-dependent, with a component of open, but not inactive state-dependent blockade. This toxin produces a concentration-dependent prolongation of QTc in the isolated rabbit heart (16.3% at 100 nM). This Mesobuthus eupeus (Lesser Asian scorpion) protein is Potassium channel toxin gamma-KTx 2.1.